A 404-amino-acid chain; its full sequence is uncharacterized protein (404 aa).

Disordered stretches follow at residues 261–307 (VSTG…SPSL) and 320–340 (KKSHSANDSEEFFREDDGGAD). 3 positions are modified to phosphoserine: Ser-267, Ser-276, and Ser-279. 2 positions are modified to phosphothreonine: Thr-290 and Thr-293. Phosphoserine occurs at positions 304, 306, 324, 358, and 362. A compositionally biased stretch (basic and acidic residues) spans 320 to 336 (KKSHSANDSEEFFREDD).

This is an uncharacterized protein from Homo sapiens (Human).